A 215-amino-acid chain; its full sequence is MKILVTGFDPFGGEAINPALEAIKKLPATIHGAEIKCIEVPTVFQKSADVLQQHIESFQPDAVLCIGQAGGRTGLTPERVAINQDDARIPDNEGNQPIDTPIRVDGKAAYFSTLPIKAMVAAIHQAGLPASVSNTAGTFVCNHLMYQALYLVDKYCPNAKAGFMHIPFMMEQVVDKPNTAAMNLDDITRGIEAAIFAIVDFKDRSDLKRVGGATH.

Residues E78, C141, and H165 contribute to the active site.

It belongs to the peptidase C15 family. Homotetramer.

The protein resides in the cytoplasm. It catalyses the reaction Release of an N-terminal pyroglutamyl group from a polypeptide, the second amino acid generally not being Pro.. Removes 5-oxoproline from various penultimate amino acid residues except L-proline. The chain is Pyrrolidone-carboxylate peptidase from Streptococcus pyogenes serotype M3 (strain SSI-1).